A 237-amino-acid polypeptide reads, in one-letter code: Urease accessory protein UreF (237 aa).

It belongs to the UreF family. In terms of assembly, ureD, UreF and UreG form a complex that acts as a GTP-hydrolysis-dependent molecular chaperone, activating the urease apoprotein by helping to assemble the nickel containing metallocenter of UreC. The UreE protein probably delivers the nickel.

Its subcellular location is the cytoplasm. In terms of biological role, required for maturation of urease via the functional incorporation of the urease nickel metallocenter. The polypeptide is Urease accessory protein UreF (Streptococcus thermophilus (strain ATCC BAA-250 / LMG 18311)).